We begin with the raw amino-acid sequence, 1379 residues long: DNA-directed RNA polymerase subunit beta (1379 aa).

Belongs to the RNA polymerase beta chain family. In terms of assembly, the RNAP catalytic core consists of 2 alpha, 1 beta, 1 beta' and 1 omega subunit. When a sigma factor is associated with the core the holoenzyme is formed, which can initiate transcription.

The catalysed reaction is RNA(n) + a ribonucleoside 5'-triphosphate = RNA(n+1) + diphosphate. DNA-dependent RNA polymerase catalyzes the transcription of DNA into RNA using the four ribonucleoside triphosphates as substrates. This chain is DNA-directed RNA polymerase subunit beta, found in Campylobacter fetus subsp. fetus (strain 82-40).